The primary structure comprises 266 residues: Enterotoxin type C-3 (266 aa).

The first 27 residues, 1 to 27, serve as a signal peptide directing secretion; sequence MYKRLFISRVILIFALILVISTPNVLA. The Zn(2+) site is built by D36 and D110. C120 and C137 are disulfide-bonded. The Zn(2+) site is built by H145 and H149.

The protein belongs to the staphylococcal/streptococcal toxin family. In terms of assembly, interacts with MHC class II molecules composed of alpha/HLA-DRA and beta/HLA-DRB1 chains. Interacts with host T-cell receptor/TCR beta variable chain TRBV8-2.

The protein localises to the secreted. In terms of biological role, staphylococcal enterotoxin that activates the host immune system by binding as unprocessed molecules to major histocompatibility (MHC) complex class II and T-cell receptor (TCR) molecules. In turn, this ternary complex activates a large number of T-lymphocytes initiating a systemic release of pro-inflammatory cytokines. Also causes the intoxication staphylococcal food poisoning syndrome. This Staphylococcus aureus protein is Enterotoxin type C-3 (entC3).